A 322-amino-acid polypeptide reads, in one-letter code: Nucleoprotein (322 aa).

RNA is bound by residues Y43, Y46, V76, R122, K240, and S269.

This sequence belongs to the tenuiviruses nucleocapsid protein family.

The protein resides in the virion. It localises to the host cytoplasm. In terms of biological role, encapsidates the genome, protecting it from nucleases. The encapsidated genomic RNA is termed the nucleocapsid (NC), and serves as template for viral transcription and replication. This is Nucleoprotein from Avena sativa (Oat).